The primary structure comprises 1200 residues: Nuclear envelope pore membrane protein POM 121 (1200 aa).

Residues 1-29 form a disordered region; it reads MSPAAAAADGGERRRPPLGGREGRSRARG. The cisternal side stretch occupies residues 1-56; it reads MSPAAAAADGGERRRPPLGGREGRSRARGYGGPAGAAALGLALLGLALYLVPAAAA. The segment covering 10–25 has biased composition (basic and acidic residues); it reads GGERRRPPLGGREGRS. Residues 57 to 77 traverse the membrane as a helical segment; the sequence is LAWLAVGASAAWWGLSREPRG. A pore side region spans residues 76 to 1200; that stretch reads RGPRALSSFV…QARRQHTRKK (1125 aa). Serine 83 is modified (phosphoserine). Disordered regions lie at residues 91-167 and 177-196; these read HPRP…SAVQ and PTPLLRPSRRPPHRDCGPLS. A compositionally biased stretch (basic and acidic residues) spans 143–152; it reads LRQDPRERPG. Serine 244 is subject to Phosphoserine. Disordered stretches follow at residues 294 to 328, 345 to 509, 530 to 627, 640 to 692, 706 to 744, 1075 to 1151, and 1173 to 1200; these read KKKRTVAEEDQLHLDGQENKRRRHDSGGSGHSAFE, SLKR…ITAE, PDDA…SDSK, SITP…LATP, PATPKSESDSPLPSSSSAATTASSSTAPPTAASTTPTFK, TSGT…SSLS, and PSFSIGAGSKTPGARQRLQARRQHTRKK. The span at 298-312 shows a compositional bias: basic and acidic residues; it reads TVAEEDQLHLDGQEN. Residues serine 319, serine 322, serine 325, serine 345, serine 355, serine 367, and serine 370 each carry the phosphoserine modification. The span at 365–374 shows a compositional bias: low complexity; sequence TSSVSSLASA. The span at 379–397 shows a compositional bias: polar residues; sequence IPSSSRNAITSSYSSTRGI. The segment covering 404–419 has biased composition (low complexity); it reads SGPTSSPFSSPASSRS. Serine 408, serine 409, serine 412, serine 413, serine 416, and serine 417 each carry phosphoserine. Composition is skewed to basic and acidic residues over residues 424 to 433 and 446 to 456; these read RPAKKTREEE and TDKESPGEKVT. Composition is skewed to low complexity over residues 463 to 477, 546 to 574, 581 to 598, and 605 to 621; these read QQSSWTSPPTPGSSG, PPFTFTLPAVGPAASPASLPAPSSNPLLE, ESPAPSSSEPAEAATVAA, and PSLLAPLVSPLAGPLAS. Polar residues predominate over residues 640–657; that stretch reads SITPLTDSKSSGVSQAEQ. 4 stretches are compositionally biased toward low complexity: residues 658–669, 681–692, 715–742, and 1075–1099; these read SVSTPASTASSP, SPPASSSSLATP, SPLPSSSSAATTASSSTAPPTAASTTPT, and TSGTFSFGSGQSGTPGTTTSFGSLS. A compositionally biased stretch (polar residues) spans 1100 to 1121; sequence QNTLGAPSQGSPFAFSVGSTPE. Positions 1190–1200 are enriched in basic residues; sequence LQARRQHTRKK.

The protein belongs to the POM121 family. In terms of processing, proteolytically cleaved by caspase-3 during apoptosis.

The protein localises to the nucleus. Its subcellular location is the nuclear pore complex. It localises to the nucleus membrane. The protein resides in the endoplasmic reticulum membrane. In terms of biological role, essential component of the nuclear pore complex (NPC). The repeat-containing domain may be involved in anchoring components of the pore complex to the pore membrane. When overexpressed in cells induces the formation of cytoplasmic annulate lamellae (AL). The protein is Nuclear envelope pore membrane protein POM 121 (Pom121) of Mus musculus (Mouse).